The sequence spans 209 residues: uncharacterized protein (209 aa).

Residues 39 to 75 (VSFENFMERYDTMEKNIQDLQNKYEEMANNLVAVMAD) adopt a coiled-coil conformation. The disordered stretch occupies residues 103-131 (TMKDATSLPPPNPNNEQSVFTNGSPTSGK). Residues 116–129 (NNEQSVFTNGSPTS) show a composition bias toward polar residues.

Belongs to the asfivirus K205R family.

It localises to the host cytoplasm. Its function is as follows. Induces host endoplasmic reticulum stress and consequently activates autophagy and NF-kappa-B signaling pathway. In turn, may induce autophagy-mediated STING1 degradation and innate immune evasion. This is an uncharacterized protein from Ornithodoros (relapsing fever ticks).